We begin with the raw amino-acid sequence, 267 residues long: Serine/arginine-rich splicing factor 1 (267 aa).

Residues 16–91 enclose the RRM 1 domain; that stretch reads CRIYVGNLPP…YRLRVEFPRS (76 aa). 2 disordered regions span residues 90-137 and 212-267; these read RSGR…PSRR and KVDG…RSRT. Over residues 93-127 the composition is skewed to gly residues; sequence RGAGGRGGGGGGGGGGGGGGGGGGGGGGGGGGGAP. The region spanning 140 to 214 is the RRM 2 domain; that stretch reads YRVVVSGLPP…ETAYIRVKVD (75 aa). The segment covering 224 to 267 has biased composition (basic residues); that stretch reads SRSRSRSRSRSRSRSNSRSRSYSPRRSRGSPRYSPRHSRSRSRT.

Belongs to the splicing factor SR family.

It localises to the cytoplasm. The protein resides in the nucleus speckle. Functionally, may play a role in preventing exon skipping, ensuring the accuracy of splicing and regulating alternative splicing. The polypeptide is Serine/arginine-rich splicing factor 1 (srsf1) (Xenopus tropicalis (Western clawed frog)).